We begin with the raw amino-acid sequence, 276 residues long: Octanoyltransferase LipM (276 aa).

The 216-residue stretch at 31–246 (GKVPPTVRFY…GFASGLEVEL (216 aa)) folds into the BPL/LPL catalytic domain. The active-site Acyl-thioester intermediate is the Cys148.

The protein belongs to the octanoyltransferase LipM family. Monomer.

The catalysed reaction is octanoyl-[ACP] + L-lysyl-[protein] = N(6)-octanoyl-L-lysyl-[protein] + holo-[ACP] + H(+). Its pathway is protein modification; protein lipoylation via endogenous pathway; protein N(6)-(lipoyl)lysine from octanoyl-[acyl-carrier-protein]. Catalyzes the transfer of endogenously produced octanoic acid from octanoyl-acyl-carrier-protein onto the lipoyl domain of GcvH, an intermediate carrier during protein lipoylation. The protein is Octanoyltransferase LipM of Brevibacillus brevis (strain 47 / JCM 6285 / NBRC 100599).